The chain runs to 363 residues: NAD(P)H-quinone oxidoreductase subunit 1, chloroplastic (363 aa).

7 helical membrane-spanning segments follow: residues 30–50 (LVPI…IVWL), 98–118 (FSIG…VIPF), 129–149 (VGVF…LMSG), 165–185 (AAQS…ISLL), 253–273 (FAFF…FVTI), 303–323 (TTTE…ISIT), and 336–356 (LLNL…LLTT).

The protein belongs to the complex I subunit 1 family. NDH is composed of at least 16 different subunits, 5 of which are encoded in the nucleus.

It is found in the plastid. Its subcellular location is the chloroplast thylakoid membrane. It catalyses the reaction a plastoquinone + NADH + (n+1) H(+)(in) = a plastoquinol + NAD(+) + n H(+)(out). The catalysed reaction is a plastoquinone + NADPH + (n+1) H(+)(in) = a plastoquinol + NADP(+) + n H(+)(out). Its function is as follows. NDH shuttles electrons from NAD(P)H:plastoquinone, via FMN and iron-sulfur (Fe-S) centers, to quinones in the photosynthetic chain and possibly in a chloroplast respiratory chain. The immediate electron acceptor for the enzyme in this species is believed to be plastoquinone. Couples the redox reaction to proton translocation, and thus conserves the redox energy in a proton gradient. In Pelargonium hortorum (Common geranium), this protein is NAD(P)H-quinone oxidoreductase subunit 1, chloroplastic.